Here is a 134-residue protein sequence, read N- to C-terminus: Profilin-2 (134 aa).

Cysteine 13 and cysteine 118 are oxidised to a cystine. An Involved in PIP2 interaction motif is present at residues 84–100; that stretch reads AVIRGKKGSGGITIKKT. Residue threonine 114 is modified to Phosphothreonine.

It belongs to the profilin family. As to quaternary structure, occurs in many kinds of cells as a complex with monomeric actin in a 1:1 ratio. Phosphorylated by MAP kinases.

The protein localises to the cytoplasm. It is found in the cytoskeleton. Binds to actin and affects the structure of the cytoskeleton. At high concentrations, profilin prevents the polymerization of actin, whereas it enhances it at low concentrations. This chain is Profilin-2, found in Olea europaea (Common olive).